Here is a 267-residue protein sequence, read N- to C-terminus: Ribosomal RNA small subunit methyltransferase A (267 aa).

Asparagine 18, leucine 20, glycine 45, glutamate 66, aspartate 91, and asparagine 112 together coordinate S-adenosyl-L-methionine.

The protein belongs to the class I-like SAM-binding methyltransferase superfamily. rRNA adenine N(6)-methyltransferase family. RsmA subfamily.

Its subcellular location is the cytoplasm. It catalyses the reaction adenosine(1518)/adenosine(1519) in 16S rRNA + 4 S-adenosyl-L-methionine = N(6)-dimethyladenosine(1518)/N(6)-dimethyladenosine(1519) in 16S rRNA + 4 S-adenosyl-L-homocysteine + 4 H(+). Specifically dimethylates two adjacent adenosines (A1518 and A1519) in the loop of a conserved hairpin near the 3'-end of 16S rRNA in the 30S particle. May play a critical role in biogenesis of 30S subunits. This is Ribosomal RNA small subunit methyltransferase A from Shewanella pealeana (strain ATCC 700345 / ANG-SQ1).